Reading from the N-terminus, the 528-residue chain is Lysine--tRNA ligase (528 aa).

A 'HIGH' region motif is present at residues 44-52; sequence PSGLPHIGT. A 'KMSKS' region motif is present at residues 290–294; it reads KISKS. K293 contacts ATP.

Belongs to the class-I aminoacyl-tRNA synthetase family.

Its subcellular location is the cytoplasm. The catalysed reaction is tRNA(Lys) + L-lysine + ATP = L-lysyl-tRNA(Lys) + AMP + diphosphate. The polypeptide is Lysine--tRNA ligase (lysS) (Rickettsia prowazekii (strain Madrid E)).